A 175-amino-acid chain; its full sequence is Protein MODIFYING WALL LIGNIN-1 (175 aa).

An N-terminal signal peptide occupies residues 1-24 (MFIFLFGLAAFFLCLSAEFQKAKA). Residues 25–52 (LLRAQVFLKGKDLKWDGESCYLPENRAF) are Cytoplasmic-facing. Residues 53–73 (GLGIAALVCVSVAQIVGNVVI) form a helical membrane-spanning segment. Topologically, residues 74-86 (CRGFTKTDKTRTT) are extracellular. The helical transmembrane segment at 87–107 (IFCIILLLFSWVNFAVAVTLI) threads the bilayer. The Cytoplasmic segment spans residues 108–135 (SVGASMNREQIYGKGWLNRECYLVKDGV). A helical transmembrane segment spans residues 136–156 (FAASGFLSVTTMAAILGAFAF). Residues 157–175 (KVKPSLQVENHDKRHTQNV) lie on the Extracellular side of the membrane.

Belongs to the DESIGUAL family. Interacts with CRK19.

It localises to the cell membrane. In terms of biological role, together with MWL2, contributes to secondary cell wall biology, specifically lignin biosynthesis. This is Protein MODIFYING WALL LIGNIN-1 from Arabidopsis thaliana (Mouse-ear cress).